The sequence spans 167 residues: Calcium-binding protein CML19 (167 aa).

4 consecutive EF-hand domains span residues Gln-23–Glu-58, Met-59–Glu-94, Asp-96–Asn-131, and Phe-132–Gly-167. Residues Asp-36, Asp-38, Ser-40, Ser-42, Glu-47, Asp-72, Asn-74, Ser-76, Glu-83, Asp-109, Asp-111, Asn-113, Lys-115, Asp-120, Asp-145, Asp-147, Asp-149, Glu-151, and Glu-156 each contribute to the Ca(2+) site.

Belongs to the centrin family. Interacts with RAD4. Calcium is required for this interaction. Interacts with SAC3B. As to expression, expressed in leaves, roots, and at lower level in stems. Barely detectable in flower buds and flowers.

Its subcellular location is the cytoplasm. It is found in the nucleus. Potential calcium sensor that binds calcium in vitro. Modulates homologous recombination and nucleotide excision repair (NER). Involved in the early response to UV irradiation. This chain is Calcium-binding protein CML19, found in Arabidopsis thaliana (Mouse-ear cress).